We begin with the raw amino-acid sequence, 152 residues long: MTIWVDADACPNVIKEILYRAAERMQMPLVLVANQSLRVPPSRFIRTLRVAAGFDVADNEIVRQCEAGDLVITADIPLAAEAIEKGAAALNSRGERYTPATIRERLTMRDFMDTLRASGIQTGGPDSLSQRDRQAFAAELEKWWLEVQRSRG.

The protein belongs to the UPF0178 family.

This is UPF0178 protein YaiI from Shigella flexneri.